The following is a 1120-amino-acid chain: Mechanosensitive channel MscK (1120 aa).

The N-terminal stretch at 1 to 33 (MTMFQYYKRSRHFVFSAFIAFVFVLLCQNTAFA) is a signal peptide. Residues 34 to 499 (RASSNGDLPT…MKITVNWQKA (466 aa)) lie on the Periplasmic side of the membrane. Coiled coils occupy residues 43-98 (TKAD…VAEA), 126-266 (STLS…TLTE), and 360-422 (DELE…RREL). Residues 500–520 (WPAVFIAFLAGLPLLLIAGLI) traverse the membrane as a helical segment. Residues 521–560 (HWRLGWLKAYQQKLASAVGSLRNDSQLNTPKAILIDLIRA) are Cytoplasmic-facing. Residues 561–581 (LPVCLIILAVGLILLTMQLNI) traverse the membrane as a helical segment. Residue serine 582 is a topological domain, periplasmic. Residues 583-603 (ELLWSFSKKLAIFWLVFGLCW) traverse the membrane as a helical segment. The Cytoplasmic segment spans residues 604-634 (KVLEKNGVAVRHFGMPEQQTSHWRRQIVRIS). The helical transmembrane segment at 635–655 (LALLPIHFWSVVAELSPLHLM) threads the bilayer. The Periplasmic portion of the chain corresponds to 656 to 657 (DD). The chain crosses the membrane as a helical span at residues 658-678 (VLGQAMIFFNLLLIAFLVWPM). The Cytoplasmic portion of the chain corresponds to 679–692 (CRESWRDKESHTMR). The chain crosses the membrane as a helical span at residues 693–713 (LVTITVLSIIPIALMVLTATG). Residues 714–728 (YFYTTLRLAGRWIET) are Periplasmic-facing. Residues 729–749 (VYLVIIWNLLYQTVLRGLSVA) traverse the membrane as a helical segment. At 750 to 796 (ARRIAWRRALARRQNLVKEGAEGAEPPEEPTIALEQVNQQTLRITML) the chain is on the cytoplasmic side. The helical transmembrane segment at 797–817 (LMFALFGVMFWAIWSDLITVF) threads the bilayer. At 818-839 (SYLDSITLWHYNGTEAGAAVVK) the chain is on the periplasmic side. Residues 840–860 (NVTMGSLLFAIIASMVAWALI) form a helical membrane-spanning segment. The Cytoplasmic segment spans residues 861-886 (RNLPGLLEVLVLSRLNMRQGASYAIT). The chain crosses the membrane as a helical span at residues 887–907 (TILNYIIIAVGAMTVFGSLGV). Topologically, residues 908 to 921 (SWDKLQWLAAALSV) are periplasmic. The chain crosses the membrane as a helical span at residues 922–942 (GLGFGLQEIFGNFVSGLIILF). At 943 to 1120 (ERPVRIGDTV…KGDDPTPAVG (178 aa)) the chain is on the cytoplasmic side. Positions 1057-1081 (YVRELRDRSRTVDELNRTIDQLCRE) form a coiled coil.

Belongs to the MscS (TC 1.A.23) family.

Its subcellular location is the cell inner membrane. Its function is as follows. Mechanosensitive channel that opens in response to membrane tension and specific ionic conditions. Requires high concentrations of external K(+), NH(4)(+), Rb(+) or Cs(+) to gate. May participate in the regulation of osmotic pressure changes within the cell, although it does not appear to have a major role in osmolarity regulation. Forms an ion channel of 1.0 nanosiemens conductance. The channel can remain active for between 30 seconds and over 3 minutes; it does not desensitize upon extended pressure. Its activity is masked in wild-type cells by the MscS channel. The chain is Mechanosensitive channel MscK (mscK) from Escherichia coli (strain K12).